The sequence spans 496 residues: GTPase Der (496 aa).

EngA-type G domains follow at residues 3–166 (PVVA…FDNL) and 208–381 (IKLA…RSAT). GTP contacts are provided by residues 9–16 (GRPNVGKS), 56–60 (DTGGI), 118–121 (NKVD), 214–221 (GRPNVGKS), 261–265 (DTAGV), and 326–329 (NKWD). Residues 382–466 (TRVGTSVLTR…PIRIQFQNSD (85 aa)) enclose the KH-like domain.

The protein belongs to the TRAFAC class TrmE-Era-EngA-EngB-Septin-like GTPase superfamily. EngA (Der) GTPase family. In terms of assembly, associates with the 50S ribosomal subunit.

GTPase that plays an essential role in the late steps of ribosome biogenesis. The polypeptide is GTPase Der (Vibrio vulnificus (strain CMCP6)).